The primary structure comprises 174 residues: CD164 sialomucin-like 2 protein (174 aa).

The signal sequence occupies residues 1–29; sequence MEAPGPRALRTALCGGCCCLLLCAQLAVA. Residues 30 to 141 lie on the Extracellular side of the membrane; that stretch reads GKGARGFGRG…AHSPGFDGAS (112 aa). N-linked (GlcNAc...) asparagine glycosylation is found at Asn71 and Asn103. A helical transmembrane segment spans residues 142-162; that stretch reads FIGGVVLVLSLQAVAFFVLHF. Residues 163 to 174 lie on the Cytoplasmic side of the membrane; the sequence is LKAKDSTYQTLI.

It belongs to the CD164 family.

It localises to the membrane. This chain is CD164 sialomucin-like 2 protein (CD164L2), found in Homo sapiens (Human).